We begin with the raw amino-acid sequence, 216 residues long: Ribonuclease HII (216 aa).

Residues A28 to E216 enclose the RNase H type-2 domain. Residues D34, E35, and D126 each contribute to the a divalent metal cation site.

The protein belongs to the RNase HII family. Mn(2+) is required as a cofactor. Requires Mg(2+) as cofactor.

It is found in the cytoplasm. The catalysed reaction is Endonucleolytic cleavage to 5'-phosphomonoester.. Its function is as follows. Endonuclease that specifically degrades the RNA of RNA-DNA hybrids. This Geotalea uraniireducens (strain Rf4) (Geobacter uraniireducens) protein is Ribonuclease HII.